A 3019-amino-acid chain; its full sequence is Genome polyprotein (3019 aa).

Serine 2 is modified (N-acetylserine; by host). The interaction with STAT1 stretch occupies residues 2–23; that stretch reads STLPKPQRKTKRNTNRRPMDVK. An interaction with EIF2AK2/PKR region spans residues 2 to 58; sequence STLPKPQRKTKRNTNRRPMDVKFPGGGQIVGGVYLLPRRGPRLGVRATRKTSERSQP. An interaction with DDX3X region spans residues 2–59; it reads STLPKPQRKTKRNTNRRPMDVKFPGGGQIVGGVYLLPRRGPRLGVRATRKTSERSQPR. Positions 2 to 75 are disordered; it reads STLPKPQRKT…PKARQPQGRH (74 aa). Residues 2–168 lie on the Cytoplasmic side of the membrane; sequence STLPKPQRKT…EDGINYATGN (167 aa). 2 consecutive short sequence motifs (nuclear localization signal) follow at residues 5 to 13 and 38 to 43; these read PKPQRKTKR and PRRGPR. The segment covering 7–16 has biased composition (basic residues); sequence PQRKTKRNTN. The span at 32-47 shows a compositional bias: low complexity; sequence GGVYLLPRRGPRLGVR. A Phosphoserine; by host modification is found at serine 53. 2 consecutive short sequence motifs (nuclear localization signal) follow at residues 58–64 and 66–71; these read PRGRRQP and PKARQP. Position 99 is a phosphoserine; by host (serine 99). The tract at residues 112-152 is important for endoplasmic reticulum and mitochondrial localization; that stretch reads PRRRSRNLGKVIDTLTCGFADLMGYIPVVGAPLGGVAAALA. At serine 116 the chain carries Phosphoserine; by host PKA. The interval 122–173 is interaction with APOA2; the sequence is VIDTLTCGFADLMGYIPVVGAPLGGVAAALAHGVRAIEDGINYATGNLPGCS. The interval 164-167 is important for lipid droplets localization; sequence YATG. The chain crosses the membrane as a helical span at residues 169–189; sequence LPGCSFSIFLLALLSCLTTPA. The propeptide at 178–191 is ER anchor for the core protein, removed in mature form by host signal peptidase; the sequence is LLALLSCLTTPASA. The Lumenal portion of the chain corresponds to 190 to 358; sequence SALTYGNSSG…FGGHWGILLA (169 aa). Residues asparagine 196, asparagine 209, asparagine 234, and asparagine 250 are each glycosylated (N-linked (GlcNAc...) asparagine; by host). The interval 265–296 is important for fusion; it reads LAGAAVVCSSLYIGDLCGSLFLAGQLFTFQPR. The N-linked (GlcNAc...) asparagine; by host glycan is linked to asparagine 305. The helical transmembrane segment at 359 to 379 threads the bilayer; it reads VAYFGMAGNWLKVLAVLFLFA. Over 380–730 the chain is Lumenal; the sequence is GVEATTTVGH…WEYIVLMFLV (351 aa). Residues 385–411 form an HVR1 region; that stretch reads TTVGHGVARTTAGITGLFSPGASQNLQ. The N-linked (GlcNAc...) asparagine; by host glycan is linked to asparagine 415. Residues asparagine 422 and asparagine 429 are each glycosylated (N-linked (GlcNAc...) (high mannose) asparagine; by host). Disulfide bonds link cysteine 428–cysteine 553, cysteine 451–cysteine 458, cysteine 487–cysteine 495, and cysteine 504–cysteine 509. A glycan (N-linked (GlcNAc...) asparagine; by host) is linked at asparagine 447. The HVR2 stretch occupies residues 474 to 479; it reads KVNISG. A glycan (N-linked (GlcNAc...) asparagine; by host) is linked at asparagine 476. Positions 481–494 are CD81-binding 1; it reads SDDRPYCWHYAPRP. A glycan (N-linked (GlcNAc...) asparagine; by host) is linked at asparagine 533. The segment at 545 to 552 is CD81-binding 2; that stretch reads PPTGGWFG. An N-linked (GlcNAc...) asparagine; by host glycan is attached at asparagine 557. Cysteines 565 and 570 form a disulfide. Asparagine 578 is a glycosylation site (N-linked (GlcNAc...) asparagine; by host). Disulfide bonds link cysteine 586–cysteine 590, cysteine 602–cysteine 625, and cysteine 612–cysteine 649. N-linked (GlcNAc...) (high mannose) asparagine; by host glycans are attached at residues asparagine 628 and asparagine 650. Cysteine 657 and cysteine 682 are joined by a disulfide. Residues 665 to 676 are PKR/eIF2-alpha phosphorylation homology domain (PePHD); sequence IEMSPLLFSTTQ. Residues 731–751 traverse the membrane as a helical segment; it reads LADARICTCLWLMLLISNVEA. Over 752–762 the chain is Lumenal; that stretch reads AVERLVVLNAA. The chain crosses the membrane as a helical span at residues 763–783; the sequence is SAAGTAGWWWAVLFLCCVWYV. The Cytoplasmic segment spans residues 784–786; the sequence is KGR. Residues 787-808 traverse the membrane as a helical segment; it reads LVPACTYMALGMWPLLLTILAL. Topologically, residues 809–818 are lumenal; the sequence is PHRAYAMDNE. A helical membrane pass occupies residues 819–839; it reads QAASLGAVGLLAITIFTITPT. Residues 840–843 lie on the Cytoplasmic side of the membrane; the sequence is YKKL. A helical membrane pass occupies residues 844 to 863; sequence LTCFIWWNQYFLARAEAMVH. The Lumenal segment spans residues 864-886; sequence EWVPDLRVRGGRDSIILLTCLLH. The helical transmembrane segment at 887–907 threads the bilayer; that stretch reads PQLGFEVTKILLAILAPLYIL. Residues 908–1031 enclose the Peptidase C18 domain; the sequence is QYSLLKVPYF…DMQRGGWKLL (124 aa). At 908–1662 the chain is on the cytoplasmic side; sequence QYSLLKVPYF…CMSADLEVIT (755 aa). Residues 909–1211 are protease NS2-3; it reads YSLLKVPYFV…PVENMETTMR (303 aa). Cysteine 927 carries S-palmitoyl cysteine; by host lipidation. The interval 934-954 is interaction with host SCPS1; the sequence is AGGRYVQACLLRLGAWTGTFI. Catalysis depends on for protease NS2 activity; shared with dimeric partner residues histidine 957, glutamate 977, and cysteine 998. The 182-residue stretch at 1032-1213 folds into the Peptidase S29 domain; it reads APITAYAQQT…ENMETTMRSP (182 aa). Residues histidine 1088 and aspartate 1112 each act as charge relay system; for serine protease NS3 activity in the active site. 2 residues coordinate Zn(2+): cysteine 1128 and cysteine 1130. Serine 1170 serves as the catalytic Charge relay system; for serine protease NS3 activity. Residues cysteine 1176 and histidine 1180 each coordinate Zn(2+). The 153-residue stretch at 1222-1374 folds into the Helicase ATP-binding domain; sequence PAVPQTYQVG…PNITETALPT (153 aa). Position 1235–1242 (1235–1242) interacts with ATP; the sequence is APTGSGKS. Mg(2+)-binding residues include serine 1242 and glutamate 1322. The DECH box signature appears at 1321 to 1324; the sequence is DECH. An RNA-binding region spans residues 1491-1503; it reads QRRGRTGRGKPGV. A helical membrane pass occupies residues 1663–1683; the sequence is STWVLVGGVLAALAAYCLSVG. The NS3-binding stretch occupies residues 1684-1695; sequence CVVICGRITLTG. The Cytoplasmic portion of the chain corresponds to 1684-1810; that stretch reads CVVICGRITL…SLTSPLRTSQ (127 aa). Residues 1811–1829 form a helical membrane-spanning segment; the sequence is TLLLNILGGWIAAQVAPPP. Topologically, residues 1830 to 1833 are lumenal; that stretch reads ASTA. A helical membrane pass occupies residues 1834–1854; it reads FVVSGLAGAAVGSIRLGRVLV. A topological domain (cytoplasmic) is located at residue aspartate 1855. The helical transmembrane segment at 1856–1876 threads the bilayer; the sequence is VLAGYGAGVSGALVAFKIMSG. The Lumenal portion of the chain corresponds to 1877–1886; the sequence is DCPTTEDMVN. The chain crosses the membrane as a helical span at residues 1887 to 1907; that stretch reads LLPALLSPGALVVGVVCAAIL. At 1908–1977 the chain is on the cytoplasmic side; it reads RRHVGPAEGA…WVNEDTATPC (70 aa). Residue cysteine 1977 is the site of S-palmitoyl cysteine; by host attachment. The stretch at 1978–2007 is an intramembrane region; the sequence is ATSWLRDVWDWVCTVLSDFKVWLQAKLFPR. Residues 2008 to 2998 are Cytoplasmic-facing; sequence LPGIPFLSCQ…YHSVSQARPR (991 aa). Zn(2+) contacts are provided by cysteine 2016, cysteine 2034, cysteine 2036, and cysteine 2057. An FKBP8-binding region spans residues 2125 to 2213; sequence EFFTEVDGVR…ASSSASQLSA (89 aa). The transcriptional activation stretch occupies residues 2125 to 2338; that stretch reads EFFTEVDGVR…PIPPPRRKRL (214 aa). Positions 2140 to 2144 are interaction with non-structural protein 4A; sequence PPCKP. The tract at residues 2189-2223 is disordered; that stretch reads ETASRRLKRGSPPSLASSSASQLSAPSLKATCTTS. The tract at residues 2194–2446 is interaction with host SKP2; sequence RLKRGSPPSL…ALITPCAAEE (253 aa). Serine 2199 is modified (phosphoserine; by host; in p56). Over residues 2199 to 2216 the composition is skewed to low complexity; it reads SPPSLASSSASQLSAPSL. Phosphoserine; by host; in p58 occurs at positions 2202, 2206, 2209, 2212, and 2215. Positions 2215-2254 are ISDR; that stretch reads SLKATCTTSKDHPDMELIEANLLWRQEMGGNITRVESENK. The interval 2215-2280 is interaction with EIF2AK2/PKR; sequence SLKATCTTSK…REISVSAECH (66 aa). The tract at residues 2254 to 2312 is NS4B-binding; it reads KVVVLDSFEPLTAEYDEREISVSAECHRPPRHKFPPALPIWARPDYNPPLLQAWQMPGY. The V3 stretch occupies residues 2305–2383; it reads QAWQMPGYEP…SITSPDPPAP (79 aa). The SH3-binding signature appears at 2328–2331; that stretch reads APIP. The Nuclear localization signal motif lies at 2333–2341; the sequence is PRRKRLVHL. Lysine 2356 is covalently cross-linked (Glycyl lysine isopeptide (Lys-Gly) (interchain with G-Cter in ubiquitin)). The interval 2359-2418 is disordered; it reads VEGSSDPGPSSDSGLSITSPDPPAPTTPDDACSEAESYSSMPPLEGEPGDPDLSSGSWST. Residues 2361–2372 show a composition bias toward low complexity; sequence GSSDPGPSSDSG. Residues serine 2457 and serine 2470 each carry the phosphoserine; by host modification. The 119-residue stretch at 2642–2760 folds into the RdRp catalytic domain; the sequence is PMGFSYDTRC…ICESAGVQED (119 aa). The Mg(2+) site is built by aspartate 2648, aspartate 2746, and aspartate 2747. A helical membrane pass occupies residues 2999–3019; it reads LLLLGLLLLTVGVGIFLVPAR.

This sequence belongs to the hepacivirus polyprotein family. As to quaternary structure, homooligomer. Interacts with E1 (via C-terminus). Interacts with the non-structural protein 5A. Interacts (via N-terminus) with host STAT1 (via SH2 domain); this interaction results in decreased STAT1 phosphorylation and ubiquitin-mediated proteasome-dependent STAT1 degradation, leading to decreased IFN-stimulated gene transcription. Interacts with host STAT3; this interaction constitutively activates STAT3. Interacts with host LTBR receptor. Interacts with host TNFRSF1A receptor and possibly induces apoptosis. Interacts with host HNRPK. Interacts with host YWHAE. Interacts with host UBE3A/E6AP. Interacts with host DDX3X. Interacts with host APOA2. Interacts with host RXRA protein. Interacts with host SP110 isoform 3/Sp110b; this interaction sequesters the transcriptional corepressor SP110 away from the nucleus. Interacts with host CREB3 nuclear transcription protein; this interaction triggers cell transformation. Interacts with host ACY3. Interacts with host C1QR1. Interacts with host RBM24; this interaction, which enhances the interaction of the mature core protein with 5'-UTR, may inhibit viral translation and favor replication. Interacts with host EIF2AK2/PKR; this interaction induces the autophosphorylation of EIF2AK2. Part of the viral assembly initiation complex composed of NS2, E1, E2, NS3, NS4A, NS5A and the mature core protein. Forms a heterodimer with envelope glycoprotein E2. Interacts with mature core protein. Interacts with protease NS2. The heterodimer E1/E2 interacts with host CLDN1; this interaction plays a role in viral entry into host cell. Interacts with host SPSB2 (via C-terminus). Part of the viral assembly initiation complex composed of NS2, E1, E2, NS3, NS4A, NS5A and the mature core protein. Interacts with host NEURL3; this interaction prevents E1 binding to glycoprotein E2. In terms of assembly, forms a heterodimer with envelope glycoprotein E1. Interacts with host CD81 and SCARB1 receptors; these interactions play a role in viral entry into host cell. Interacts with host EIF2AK2/PKR; this interaction inhibits EIF2AK2 and probably allows the virus to evade the innate immune response. Interacts with host CD209/DC-SIGN and CLEC4M/DC-SIGNR. Interact with host SPCS1; this interaction is essential for viral particle assembly. Interacts with protease NS2. The heterodimer E1/E2 interacts with host CLDN1; this interaction plays a role in viral entry into host cell. Part of the viral assembly initiation complex composed of NS2, E1, E2, NS3, NS4A, NS5A and the mature core protein. Interacts with host SLC3A2/4F2hc; the interaction may facilitate viral entry into host cell. Interacts with human PLSCR1. As to quaternary structure, homohexamer. Homoheptamer. Interacts with protease NS2. Homodimer. Interacts with host SPCS1; this interaction is essential for viral particle assembly. Interacts with envelope glycoprotein E1. Interacts with envelope glycoprotein E2. Interacts with viroporin p7. Interacts with serine protease/helicase NS3. Part of the replication complex composed of NS2, NS3, NS4A, NS4B, NS5A and the RNA-directed RNA polymerase embedded in an ER-derived membranous web. Part of the viral assembly initiation complex composed of NS2, E1, E2, NS3, NS4A, NS5A and the mature core protein. In terms of assembly, interacts with protease NS2. Interacts with non-structural protein 4A; this interaction stabilizes the folding of NS3 serine protease. NS3-NS4A interaction is essential for NS3 activation and allows membrane anchorage of the latter. NS3/NS4A complex also prevents phosphorylation of host IRF3, thus preventing the establishment of dsRNA induced antiviral state. Interacts with host MAVS; this interaction leads to the cleavage and inhibition of host MAVS. Interacts with host TICAM1; this interaction leads to the cleavage and inhibition of host TICAM1. Interacts with host TANK-binding kinase/TBK1; this interaction results in the inhibition of the association between TBK1 and IRF3, which leads to the inhibition of IRF3 activation. Interacts with host RBM24. Part of the replication complex composed of NS2, NS3, NS4A, NS4B, NS5A and the RNA-directed RNA polymerase embedded in an ER-derived membranous web. Part of the viral assembly initiation complex composed of NS2, E1, E2, NS3, NS4A, NS5A and the mature core protein. As to quaternary structure, interacts with NS3 serine protease; this interaction stabilizes the folding of NS3 serine protease. NS3-NS4A interaction is essential for NS3 activation and allows membrane anchorage of the latter. Interacts with non-structural protein 5A (via N-terminus). Part of the replication complex composed of NS2, NS3, NS4A, NS4B, NS5A and the RNA-directed RNA polymerase embedded in an ER-derived membranous web. Part of the viral assembly initiation complex composed of NS2, E1, E2, NS3, NS4A, NS5A and the mature core protein. Homomultimer. Interacts with non-structural protein NS5A. Interacts with host PLA2G4C; this interaction likely initiates the recruitment of replication complexes to lipid droplets. Interacts with host STING; this interaction disrupts the interaction between STING and TBK1 thereby suppressing the interferon signaling. Part of the replication complex composed of NS2, NS3, NS4A, NS4B, NS5A and the RNA-directed RNA polymerase embedded in an ER-derived membranous web. In terms of assembly, monomer. Homodimer; dimerization is required for RNA-binding. Interacts with the mature core protein. Interacts (via N-terminus) with non-structural protein 4A. Interacts with non-structural protein 4B. Interacts (via region D2) with RNA-directed RNA polymerase. Part of the viral assembly initiation complex composed of NS2, E1, E2, NS3, NS4A, NS5A and the mature core protein. Part of the replication complex composed of NS2, NS3, NS4A, NS4B, NS5A and the RNA-directed RNA polymerase embedded in an ER-derived membranous web. Interacts with host GRB2. Interacts with host BIN1. Interacts with host PIK3R1. Interacts with host SRCAP. Interacts with host FKBP8. Interacts (via C-terminus) with host VAPB (via MSP domain). Interacts with host EIF2AK2/PKR; this interaction leads to disruption of EIF2AK2 dimerization by NS5A and probably allows the virus to evade the innate immune response. Interacts (via N-terminus) with host PACSIN2 (via N-terminus); this interaction attenuates protein kinase C alpha-mediated phosphorylation of PACSIN2 by disrupting the interaction between PACSIN2 and PRKCA. Interacts (via N-terminus) with host SRC kinase (via SH2 domain). Interacts with most Src-family kinases. Interacts with host IFI27 and SKP2; promotes the ubiquitin-mediated proteasomal degradation of NS5A. Interacts with host GPS2. Interacts with host TNFRSF21; this interaction allows the modulation by the virus of JNK, p38 MAPK, STAT3, and Akt signaling pathways in a DR6-dependent manner. Interacts (via N-terminus) with host CIDEB (via N-terminus); this interaction seems to regulate the association of HCV particles with APOE. Interacts with host CHKA/Choline Kinase-alpha; CHKA bridges host PI4KA and NS5A and potentiates NS5A-stimulated PI4KA activity, which then facilitates the targeting of the ternary complex to the ER for viral replication. Interacts with host SPSB2 (via C-terminus); this interaction targets NS5A for ubiquitination and degradation. Interacts with host RAB18; this interaction may promote the association of NS5A and other replicase components with lipid droplets. Interacts (via region D2) with host PPIA/CYPA; the interaction stimulates RNA-binding ability of NS5A and is dependent on the peptidyl-prolyl cis-trans isomerase activity of PPIA/CYPA. Interacts with host TRIM14; this interaction induces the degradation of NS5A. As to quaternary structure, homooligomer. Interacts with non-structural protein 5A. Interacts with host VAPB. Interacts with host PRK2/PKN2. Interacts with host HNRNPA1 and SEPT6; these interactions facilitate viral replication. Part of the replication complex composed of NS2, NS3, NS4A, NS4B, NS5A and the RNA-directed RNA polymerase. Requires Zn(2+) as cofactor. Mg(2+) is required as a cofactor. Specific enzymatic cleavages in vivo yield mature proteins. The structural proteins, core, E1, E2 and p7 are produced by proteolytic processing by host signal peptidases. The core protein precursor is synthesized as a 23 kDa, which is retained in the ER membrane through the hydrophobic signal peptide. Cleavage by the signal peptidase releases the 21 kDa mature core protein. The cleavage of the core protein precursor occurs between aminoacids 176 and 188 but the exact cleavage site is not known. Some degraded forms of the core protein appear as well during the course of infection. The other proteins (p7, NS2, NS3, NS4A, NS4B, NS5A and NS5B) are cleaved by the viral proteases. Autoprocessing between NS2 and NS3 is mediated by the NS2 cysteine protease catalytic domain and regulated by the NS3 N-terminal domain. In terms of processing, phosphorylated by host PKC and PKA. Post-translationally, ubiquitinated; mediated by UBE3A and leading to core protein subsequent proteasomal degradation. Highly N-glycosylated. In terms of processing, palmitoylation is required for NS2/3 autoprocessing and E2 recruitment to membranes. Post-translationally, palmitoylated. This modification may play a role in its polymerization or in protein-protein interactions. Phosphorylated on serines in a basal form termed p56. p58 is a hyperphosphorylated form of p56. p56 and p58 coexist in the cell in roughly equivalent amounts. Hyperphosphorylation is dependent on the presence of NS4A. Host CSNK1A1/CKI-alpha or RPS6KB1 kinases may be responsible for NS5A phosphorylation. In terms of processing, tyrosine phosphorylation is essential for the interaction with host SRC. Post-translationally, the N-terminus is phosphorylated by host PRK2/PKN2.

It localises to the host endoplasmic reticulum membrane. It is found in the host mitochondrion membrane. Its subcellular location is the virion. The protein resides in the host cytoplasm. The protein localises to the host nucleus. It localises to the host lipid droplet. It is found in the virion membrane. Its subcellular location is the host mitochondrion. The protein resides in the host cell membrane. The protein localises to the host perinuclear region. It carries out the reaction Hydrolysis of four peptide bonds in the viral precursor polyprotein, commonly with Asp or Glu in the P6 position, Cys or Thr in P1 and Ser or Ala in P1'.. The enzyme catalyses a ribonucleoside 5'-triphosphate + H2O = a ribonucleoside 5'-diphosphate + phosphate + H(+). It catalyses the reaction ATP + H2O = ADP + phosphate + H(+). The catalysed reaction is RNA(n) + a ribonucleoside 5'-triphosphate = RNA(n+1) + diphosphate. Inhibited by the antiviral drug hexamethylene amiloride. Inhibition by amantadine appears to be genotype-dependent. Also inhibited by long-alkyl-chain iminosugar derivatives. With respect to regulation, activity is up-regulated by PRK2/PKN2-mediated phosphorylation. In terms of biological role, packages viral RNA to form a viral nucleocapsid, and promotes virion budding. Participates in the viral particle production as a result of its interaction with the non-structural protein 5A. Binds RNA and may function as a RNA chaperone to induce the RNA structural rearrangements taking place during virus replication. Modulates viral translation initiation by interacting with viral IRES and 40S ribosomal subunit. Affects various cell signaling pathways, host immunity and lipid metabolism. Prevents the establishment of cellular antiviral state by blocking the interferon-alpha/beta (IFN-alpha/beta) and IFN-gamma signaling pathways and by blocking the formation of phosphorylated STAT1 and promoting ubiquitin-mediated proteasome-dependent degradation of STAT1. Activates STAT3 leading to cellular transformation. Regulates the activity of cellular genes, including c-myc and c-fos. May repress the promoter of p53, and sequester CREB3 and SP110 isoform 3/Sp110b in the cytoplasm. Represses cell cycle negative regulating factor CDKN1A, thereby interrupting an important check point of normal cell cycle regulation. Targets transcription factors involved in the regulation of inflammatory responses and in the immune response: suppresses TNF-induced NF-kappa-B activation, and activates AP-1. Binds to dendritic cells (DCs) via C1QR1, resulting in down-regulation of T-lymphocytes proliferation. Alters lipid metabolism by interacting with hepatocellular proteins involved in lipid accumulation and storage. Induces up-regulation of FAS promoter activity, and thereby contributes to the increased triglyceride accumulation in hepatocytes (steatosis). Its function is as follows. Forms a heterodimer with envelope glycoprotein E2, which mediates virus attachment to the host cell, virion internalization through clathrin-dependent endocytosis and fusion with host membrane. Fusion with the host cell is most likely mediated by both E1 and E2, through conformational rearrangements of the heterodimer required for fusion rather than a classical class II fusion mechanism. E1/E2 heterodimer binds host apolipoproteins such as APOB and ApoE thereby forming a lipo-viro-particle (LVP). APOE associated to the LVP allows the initial virus attachment to cell surface receptors such as the heparan sulfate proteoglycans (HSPGs), syndecan-1 (SDC1), syndecan-1 (SDC2), the low-density lipoprotein receptor (LDLR) and scavenger receptor class B type I (SCARB1). The cholesterol transfer activity of SCARB1 allows E2 exposure and binding of E2 to SCARB1 and the tetraspanin CD81. E1/E2 heterodimer binding on CD81 activates the epithelial growth factor receptor (EGFR) signaling pathway. Diffusion of the complex E1-E2-EGFR-SCARB1-CD81 to the cell lateral membrane allows further interaction with Claudin 1 (CLDN1) and occludin (OCLN) to finally trigger HCV entry. Forms a heterodimer with envelope glycoprotein E1, which mediates virus attachment to the host cell, virion internalization through clathrin-dependent endocytosis and fusion with host membrane. Fusion with the host cell is most likely mediated by both E1 and E2, through conformational rearrangements of the heterodimer required for fusion rather than a classical class II fusion mechanism. The interaction between envelope glycoprotein E2 and host apolipoprotein E/APOE allows the proper assembly, maturation and infectivity of the viral particles. This interaction is probably promoted via the up-regulation of cellular autophagy by the virus. E1/E2 heterodimer binds host apolipoproteins such as APOB and APOE thereby forming a lipo-viro-particle (LVP). APOE associated to the LVP allows the initial virus attachment to cell surface receptors such as the heparan sulfate proteoglycans (HSPGs), syndecan-1 (SDC1), syndecan-1 (SDC2), the low-density lipoprotein receptor (LDLR) and scavenger receptor class B type I (SCARB1). The cholesterol transfer activity of SCARB1 allows E2 exposure and binding of E2 to SCARB1 and the tetraspanin CD81. E1/E2 heterodimer binding on CD81 activates the epithelial growth factor receptor (EGFR) signaling pathway. Diffusion of the complex E1-E2-EGFR-SCARB1-CD81 to the cell lateral membrane allows further interaction with Claudin 1 (CLDN1) and occludin (OCLN) to finally trigger HCV entry. Inhibits host EIF2AK2/PKR activation, preventing the establishment of an antiviral state. Viral ligand for CD209/DC-SIGN and CLEC4M/DC-SIGNR, which are respectively found on dendritic cells (DCs), and on liver sinusoidal endothelial cells and macrophage-like cells of lymph node sinuses. These interactions allow the capture of circulating HCV particles by these cells and subsequent facilitated transmission to permissive cells such as hepatocytes and lymphocyte subpopulations. The interaction between E2 and host amino acid transporter complex formed by SLC3A2 and SLC7A5/LAT1 may facilitate viral entry into host cell. Functionally, ion channel protein that acts as a viroporin and plays an essential role in the assembly, envelopment and secretion of viral particles. Regulates the host cell secretory pathway, which induces the intracellular retention of viral glycoproteins and favors assembly of viral particles. Creates a pore in acidic organelles and releases Ca(2+) and H(+) in the cytoplasm of infected cells, leading to a productive viral infection. High levels of cytoplasmic Ca(2+) may trigger membrane trafficking and transport of viral ER-associated proteins to viroplasms, sites of viral genome replication. This ionic imbalance induces the assembly of the inflammasome complex, which triggers the maturation of pro-IL-1beta into IL-1beta through the action of caspase-1. Targets also host mitochondria and induces mitochondrial depolarization. In addition of its role as a viroporin, acts as a lipid raft adhesion factor. In terms of biological role, cysteine protease required for the proteolytic auto-cleavage between the non-structural proteins NS2 and NS3. The N-terminus of NS3 is required for the function of NS2 protease (active region NS2-3). Promotes the initiation of viral particle assembly by mediating the interaction between structural and non-structural proteins. Its function is as follows. Displays three enzymatic activities: serine protease with a chymotrypsin-like fold, NTPase and RNA helicase. NS3 serine protease, in association with NS4A, is responsible for the cleavages of NS3-NS4A, NS4A-NS4B, NS4B-NS5A and NS5A-NS5B. The NS3/NS4A complex prevents phosphorylation of host IRF3, thus preventing the establishment of dsRNA induced antiviral state. The NS3/NS4A complex induces host amino acid transporter component SLC3A2, thus contributing to HCV propagation. NS3 RNA helicase binds to RNA and unwinds both dsDNA and dsRNA in the 3' to 5' direction, and likely resolves RNA complicated stable secondary structures in the template strand. Binds a single ATP and catalyzes the unzipping of a single base pair of dsRNA. Inhibits host antiviral proteins TBK1 and IRF3 thereby preventing the establishment of an antiviral state. Cleaves host MAVS/CARDIF thereby preventing the establishment of an antiviral state. Cleaves host TICAM1/TRIF, thereby disrupting TLR3 signaling and preventing the establishment of an antiviral state. Induces a specific membrane alteration that serves as a scaffold for the virus replication complex. This membrane alteration gives rise to the so-called ER-derived membranous web that contains the replication complex. NS4B self-interaction contributes to its function in membranous web formation. Promotes host TRIF protein degradation in a CASP8-dependent manner thereby inhibiting host TLR3-mediated interferon signaling. Disrupts the interaction between STING and TBK1 contributing to the inhibition of interferon signaling. Functionally, phosphorylated protein that is indispensable for viral replication and assembly. Both hypo- and hyperphosphorylated states are required for the viral life cycle. The hyperphosphorylated form of NS5A is an inhibitor of viral replication. Involved in RNA-binding and especially in binding to the viral genome. Zinc is essential for RNA-binding. Participates in the viral particle production as a result of its interaction with the mature viral core protein. Its interaction with host VAPB may target the viral replication complex to vesicles. Down-regulates viral IRES translation initiation. Mediates interferon resistance, presumably by interacting with and inhibiting host EIF2AK2/PKR. Prevents BIN1-induced apoptosis. Acts as a transcriptional activator of some host genes important for viral replication when localized in the nucleus. Via the interaction with host PACSIN2, modulates lipid droplet formation in order to promote virion assembly. Modulates TNFRSF21/DR6 signaling pathway for viral propagation. In terms of biological role, RNA-dependent RNA polymerase that performs primer-template recognition and RNA synthesis during viral replication. Initiates RNA transcription/replication at a flavin adenine dinucleotide (FAD), resulting in a 5'- FAD cap on viral RNAs. In this way, recognition of viral 5' RNA by host pattern recognition receptors can be bypassed, thereby evading activation of antiviral pathways. This is Genome polyprotein from Hepatitis C virus genotype 6a (isolate 6a33) (HCV).